Here is a 189-residue protein sequence, read N- to C-terminus: Ornithine decarboxylase antizyme 2 (189 aa).

At Ser186 the chain carries Phosphoserine.

It belongs to the ODC antizyme family. In terms of assembly, interacts with ODC1 and thereby sterically blocks ODC homodimerization. Interacts with AZIN2; this interaction disrupts the interaction between the antizyme and ODC1.

It localises to the nucleus. Its function is as follows. Ornithine decarboxylase (ODC) antizyme protein that negatively regulates ODC activity and intracellular polyamine biosynthesis and uptake in response to increased intracellular polyamine levels. Binds to ODC monomers, inhibiting the assembly of the functional ODC homodimers. Does not target the ODC monomers for degradation, which allows a protein synthesis-independent restoration of ODC activity. Involved in the translocation of AZIN2 from ER-Golgi intermediate compartment (ERGIC) to the cytosol. The polypeptide is Ornithine decarboxylase antizyme 2 (OAZ2) (Homo sapiens (Human)).